Reading from the N-terminus, the 61-residue chain is Small ribosomal subunit protein uS14 (61 aa).

Zn(2+)-binding residues include Cys-24, Cys-27, Cys-40, and Cys-43.

It belongs to the universal ribosomal protein uS14 family. Zinc-binding uS14 subfamily. In terms of assembly, part of the 30S ribosomal subunit. Contacts proteins S3 and S10. Requires Zn(2+) as cofactor.

Binds 16S rRNA, required for the assembly of 30S particles and may also be responsible for determining the conformation of the 16S rRNA at the A site. This Borreliella burgdorferi (strain ATCC 35210 / DSM 4680 / CIP 102532 / B31) (Borrelia burgdorferi) protein is Small ribosomal subunit protein uS14.